A 487-amino-acid polypeptide reads, in one-letter code: MSLTLAIVGRPNVGKSTLFNRLVGKRLALVDDQPGVTRDLREGQARLGDLRFTVIDTAGLETATDDSLQGRMRRLTERAVDMADICLFMIDARAGVTPNDEIFADILRRRSAHVILAANKAEGAAADAGVIEAYGLGLGEPIRLSAEHGEGLNELYAVLMPLADEMEQQAEEQAPETDVDLDPEDEDGEEVAAPHAITREKPLQVAVVGRPNAGKSTLINRILGEDRLLTGPEAGITRDAISLQIDWNDTPMRIFDTAGMRKKAKVQEKLEKLSVSDGLRAVKFAEVVVVLLDAAIPFEQQDLRIADLAEREGRAVVIAVNKWDVEENKQDKLRELKESFERLLPQLRGAPLVTVSAKTGRGLERLHDAILRAHEVWNRRIPTAALNRWLIGMLEQHPPPAPQGKRIKLRYMTQAKTRPPGFVVMCSHPDKMPESYSRYLVNGLRADFDMPGTPIRLTLRGQGDKNPYKGRRKKNAGALAKHLKSRG.

EngA-type G domains lie at 3-167 (LTLA…DEME) and 203-378 (LQVA…EVWN). Residues 9-16 (GRPNVGKS), 56-60 (DTAGL), and 119-122 (NKAE) each bind GTP. The span at 167 to 190 (EQQAEEQAPETDVDLDPEDEDGEE) shows a compositional bias: acidic residues. The segment at 167-191 (EQQAEEQAPETDVDLDPEDEDGEEV) is disordered. GTP contacts are provided by residues 209 to 216 (GRPNAGKS), 256 to 260 (DTAGM), and 321 to 324 (NKWD). One can recognise a KH-like domain in the interval 379-465 (RRIPTAALNR…RLTLRGQGDK (87 aa)). Positions 458–487 (TLRGQGDKNPYKGRRKKNAGALAKHLKSRG) are disordered. Basic residues predominate over residues 468–487 (YKGRRKKNAGALAKHLKSRG).

Belongs to the TRAFAC class TrmE-Era-EngA-EngB-Septin-like GTPase superfamily. EngA (Der) GTPase family. As to quaternary structure, associates with the 50S ribosomal subunit.

Its function is as follows. GTPase that plays an essential role in the late steps of ribosome biogenesis. This Ruegeria pomeroyi (strain ATCC 700808 / DSM 15171 / DSS-3) (Silicibacter pomeroyi) protein is GTPase Der.